The primary structure comprises 217 residues: Ufm1-specific protease 1 (217 aa).

Catalysis depends on residues C53, D175, and H177.

This sequence belongs to the peptidase C78 family. In terms of tissue distribution, widely expressed. Expressed at higher level in brain, heart, kidney and skeletal muscle.

It localises to the cytoplasm. The protein resides in the cytosol. In terms of biological role, thiol-dependent isopeptidase that specifically mediate the processing of UFM1 precursors as well as the deconjugation of UFM1 from target proteins. Mainly responsible for the maturation of the UFM1 precursor, a prerequisite for conjugation reactions. The protein is Ufm1-specific protease 1 of Mus musculus (Mouse).